The following is a 407-amino-acid chain: Na(+)-translocating NADH-quinone reductase subunit F (407 aa).

A helical membrane pass occupies residues 3-23 (IILGVVMFTLIVLALVLVILF). The 2Fe-2S ferredoxin-type domain occupies 32-126 (GDITISVNDD…DMDIELPEEI (95 aa)). The [2Fe-2S] cluster site is built by Cys69, Cys75, Cys78, and Cys110. Residues 129–269 (VKKWECTVIS…SGPFGEFFAK (141 aa)) enclose the FAD-binding FR-type domain. The interval 272–389 (DAEMVFVGGG…PMMNAAVIGM (118 aa)) is catalytic.

It belongs to the NqrF family. As to quaternary structure, composed of six subunits; NqrA, NqrB, NqrC, NqrD, NqrE and NqrF. [2Fe-2S] cluster is required as a cofactor. The cofactor is FAD.

The protein resides in the cell inner membrane. The enzyme catalyses a ubiquinone + n Na(+)(in) + NADH + H(+) = a ubiquinol + n Na(+)(out) + NAD(+). Functionally, NQR complex catalyzes the reduction of ubiquinone-1 to ubiquinol by two successive reactions, coupled with the transport of Na(+) ions from the cytoplasm to the periplasm. The first step is catalyzed by NqrF, which accepts electrons from NADH and reduces ubiquinone-1 to ubisemiquinone by a one-electron transfer pathway. The sequence is that of Na(+)-translocating NADH-quinone reductase subunit F from Vibrio campbellii (strain ATCC BAA-1116).